Reading from the N-terminus, the 422-residue chain is Glutamate 2,3-aminomutase (422 aa).

Residues 150–371 enclose the Radical SAM core domain; the sequence is RRYPDRLIIN…AIPTYIVNAP (222 aa). Positions 164, 168, and 171 each coordinate [4Fe-4S] cluster. Residue Lys376 is modified to N6-(pyridoxal phosphate)lysine.

The protein belongs to the radical SAM superfamily. It depends on pyridoxal 5'-phosphate as a cofactor. [4Fe-4S] cluster is required as a cofactor.

It carries out the reaction L-glutamate = 3-aminopentanedioate. Its function is as follows. Catalyzes the interconversion of L-glutamate and L-beta-glutamate. Does not have L-lysine 2,3-aminomutase activity. The sequence is that of Glutamate 2,3-aminomutase (eam) from Clostridioides difficile (strain 630) (Peptoclostridium difficile).